Consider the following 569-residue polypeptide: Aspartokinase 1, chloroplastic (569 aa).

The N-terminal 90 residues, 1 to 90, are a transit peptide targeting the chloroplast; the sequence is MAATRVRCCH…VDEKGITCVM (90 aa). The ATP site is built by lysine 91, glycine 94, and serine 123. Glutamate 207 contributes to the substrate binding site. 2 consecutive ACT domains span residues 405–483 and 484–560; these read IAST…AIIS and LIGN…GNGS. Glutamine 413 and glycine 415 together coordinate L-lysine. Serine 430 serves as a coordination point for S-adenosyl-L-methionine. Residues valine 431, aspartate 432, and serine 437 each coordinate L-lysine. Residues serine 452 and arginine 453 each coordinate S-adenosyl-L-methionine.

It belongs to the aspartokinase family. In terms of assembly, homodimer.

It is found in the plastid. It localises to the chloroplast. It carries out the reaction L-aspartate + ATP = 4-phospho-L-aspartate + ADP. It participates in amino-acid biosynthesis; L-lysine biosynthesis via DAP pathway; (S)-tetrahydrodipicolinate from L-aspartate: step 1/4. It functions in the pathway amino-acid biosynthesis; L-methionine biosynthesis via de novo pathway; L-homoserine from L-aspartate: step 1/3. Its pathway is amino-acid biosynthesis; L-threonine biosynthesis; L-threonine from L-aspartate: step 1/5. Inhibited by S-adenosyl-L-methionine (SAM) and lysine in a synergistic manner. No inhibition by threonine, leucine or SAM alone, and no activation or inhibition by alanine, cysteine, isoleucine, serine, valine, methionine, glutamine, asparagine, glutamic acid or arginine. Its function is as follows. Involved in the first step of essential amino acids lysine, threonine, methionine and isoleucine synthesis via the aspartate-family pathway. The chain is Aspartokinase 1, chloroplastic (AK1) from Arabidopsis thaliana (Mouse-ear cress).